The primary structure comprises 522 residues: Protein nucleotidyltransferase YdiU (522 aa).

ATP is bound by residues Gly-109, Gly-111, Arg-112, Lys-132, Asp-144, Gly-145, Arg-195, and Arg-202. The active-site Proton acceptor is the Asp-271. Asn-272 and Asp-281 together coordinate Mg(2+). An ATP-binding site is contributed by Asp-281.

Belongs to the SELO family. It depends on Mg(2+) as a cofactor. The cofactor is Mn(2+).

The catalysed reaction is L-seryl-[protein] + ATP = 3-O-(5'-adenylyl)-L-seryl-[protein] + diphosphate. It carries out the reaction L-threonyl-[protein] + ATP = 3-O-(5'-adenylyl)-L-threonyl-[protein] + diphosphate. It catalyses the reaction L-tyrosyl-[protein] + ATP = O-(5'-adenylyl)-L-tyrosyl-[protein] + diphosphate. The enzyme catalyses L-histidyl-[protein] + UTP = N(tele)-(5'-uridylyl)-L-histidyl-[protein] + diphosphate. The catalysed reaction is L-seryl-[protein] + UTP = O-(5'-uridylyl)-L-seryl-[protein] + diphosphate. It carries out the reaction L-tyrosyl-[protein] + UTP = O-(5'-uridylyl)-L-tyrosyl-[protein] + diphosphate. In terms of biological role, nucleotidyltransferase involved in the post-translational modification of proteins. It can catalyze the addition of adenosine monophosphate (AMP) or uridine monophosphate (UMP) to a protein, resulting in modifications known as AMPylation and UMPylation. This chain is Protein nucleotidyltransferase YdiU, found in Burkholderia multivorans (strain ATCC 17616 / 249).